A 565-amino-acid chain; its full sequence is NAD-dependent malic enzyme (565 aa).

Y104 (proton donor) is an active-site residue. R157 lines the NAD(+) pocket. Catalysis depends on K175, which acts as the Proton acceptor. Positions 246, 247, and 270 each coordinate a divalent metal cation. Residues D270 and N418 each contribute to the NAD(+) site.

The protein belongs to the malic enzymes family. In terms of assembly, homotetramer. Mg(2+) serves as cofactor. Requires Mn(2+) as cofactor.

The enzyme catalyses (S)-malate + NAD(+) = pyruvate + CO2 + NADH. The catalysed reaction is oxaloacetate + H(+) = pyruvate + CO2. The chain is NAD-dependent malic enzyme from Escherichia coli O9:H4 (strain HS).